Here is a 748-residue protein sequence, read N- to C-terminus: Disintegrin and metalloproteinase domain-containing protein 10 (748 aa).

Residues 1–19 (MVLLRVLILLLSWVAGLGG) form the signal peptide. The propeptide occupies 20-213 (QYGNPLNKYI…NGPELLRKKR (194 aa)). Residues 20–672 (QYGNPLNKYI…SPELYENIAE (653 aa)) lie on the Extracellular side of the membrane. The short motif at 171-178 (GGCADHSV) is the Cysteine switch element. Cys-173 provides a ligand contact to Zn(2+). One can recognise a Peptidase M12B domain in the interval 220–456 (NTCQLYIQTD…KRNNCFVESG (237 aa)). N-linked (GlcNAc...) asparagine glycans are attached at residues Asn-267 and Asn-278. 16 disulfides stabilise this stretch: Cys-344–Cys-451, Cys-399–Cys-435, Cys-460–Cys-495, Cys-471–Cys-484, Cys-473–Cys-479, Cys-483–Cys-515, Cys-503–Cys-511, Cys-510–Cys-536, Cys-524–Cys-543, Cys-530–Cys-562, Cys-555–Cys-567, Cys-572–Cys-598, Cys-580–Cys-607, Cys-582–Cys-597, Cys-594–Cys-639, and Cys-632–Cys-645. His-383 serves as a coordination point for Zn(2+). Residue Glu-384 is part of the active site. Zn(2+)-binding residues include His-387 and His-393. A glycan (N-linked (GlcNAc...) asparagine) is linked at Asn-439. Residues 457–551 (QPICGNGMVE…LCPASDPKPN (95 aa)) form the Disintegrin domain. An N-linked (GlcNAc...) asparagine glycan is attached at Asn-551. Residues 673–696 (WIVAYWWAVLLMGIALIMLMAGFI) traverse the membrane as a helical segment. Over 697–748 (KICSVHTPSSNPKLPPPKPLPGTLKRRRPPQPIQQPQRQRPRESYQMGHMRR) the chain is Cytoplasmic. Positions 704–748 (PSSNPKLPPPKPLPGTLKRRRPPQPIQQPQRQRPRESYQMGHMRR) are disordered. Residues 708–715 (PKLPPPKP) carry the SH3-binding motif. A Phosphothreonine modification is found at Thr-719. The SH3-binding motif lies at 722–728 (RRRPPQP). The interaction with AP2A1, AP2A2 and AP2M1 stretch occupies residues 734–748 (RQRPRESYQMGHMRR).

In terms of assembly, forms a ternary EFNA5-EPHA3-ADAM10 complex mediating EFNA5 extracellular domain shedding by ADAM10 which regulates the EFNA5-EPHA3 complex internalization and function, the cleavage occurs in trans, with ADAM10 and its substrate being on the membranes of opposing cells. Interacts with the clathrin adapter AP2 complex subunits AP2A1, AP2A2, AP2B1, and AP2M1; this interaction facilitates ADAM10 endocytosis from the plasma membrane during long-term potentiation in hippocampal neurons. Forms a ternary complex composed of ADAM10, EPHA4 and CADH1; within the complex, ADAM10 cleaves CADH1 which disrupts adherens junctions. Interacts with EPHA2. Interacts with NGF in a divalent cation-dependent manner. Interacts with TSPAN14; the interaction promotes ADAM10 maturation and cell surface expression. Interacts with TSPAN5, TSPAN10, TSPAN14, TSPAN15, TSPAN17 and TSPAN33; these interactions regulate ADAM10 substrate specificity, endocytosis and turnover. Interacts (via extracellular domain) with TSPAN33 (via extracellular domain) and (via cytoplasmic domain) with AFDN; interaction with TSPAN33 allows the docking of ADAM10 to zonula adherens through a PDZ11-dependent interaction between TSPAN33 and PLEKHA7 while interaction with AFDN locks ADAM10 at zonula adherens. Interacts with DLG1; this interaction recruits ADAM10 to the cell membrane during long-term depression in hippocampal neurons. Interacts (via extracellular domain) with BACE1 (via extracellular domain). Interacts with FAM171A1. Zn(2+) serves as cofactor. In terms of processing, the precursor is cleaved by furin and PCSK7. As to expression, expressed at low level in kidney, spleen, lung, adrenal, heart and peripheral nerve.

The protein localises to the golgi apparatus membrane. The protein resides in the cell membrane. It is found in the cytoplasmic vesicle. It localises to the clathrin-coated vesicle. Its subcellular location is the cell projection. The protein localises to the axon. The protein resides in the dendrite. It is found in the cell junction. It localises to the adherens junction. Its subcellular location is the cytoplasm. The catalysed reaction is Endopeptidase of broad specificity.. Catalytically inactive when the propeptide is intact and associated with the mature enzyme. The disintegrin and cysteine-rich regions modulate access of substrates to exerts an inhibitory effect on the cleavage of ADAM10 substrates. Functionally, transmembrane metalloprotease which mediates the ectodomain shedding of a myriad of transmembrane proteins, including adhesion proteins, growth factor precursors and cytokines being essential for development and tissue homeostasis. Associates with six members of the tetraspanin superfamily TspanC8 which regulate its exit from the endoplasmic reticulum and its substrate selectivity. Cleaves the membrane-bound precursor of TNF-alpha at '76-Ala-|-Val-77' to its mature soluble form. Responsible for the proteolytical release of soluble JAM3 from endothelial cells surface. Responsible for the proteolytic release of several other cell-surface proteins, including heparin-binding epidermal growth-like factor, ephrin-A2, CD44, CDH2 and for constitutive and regulated alpha-secretase cleavage of amyloid precursor protein (APP). Contributes to the normal cleavage of the cellular prion protein. Involved in the cleavage of the adhesion molecule L1 at the cell surface and in released membrane vesicles, suggesting a vesicle-based protease activity. Also controls the proteolytic processing of Notch and mediates lateral inhibition during neurogenesis. Required for the development of type 1 transitional B cells into marginal zone B cells, probably by cleaving Notch. Responsible for the FasL ectodomain shedding and for the generation of the remnant ADAM10-processed FasL (FasL APL) transmembrane form. Also cleaves the ectodomain of the integral membrane proteins CORIN and ITM2B. Mediates the proteolytic cleavage of LAG3, leading to release the secreted form of LAG3. Mediates the proteolytic cleavage of IL6R and IL11RA, leading to the release of secreted forms of IL6R and IL11RA. Enhances the cleavage of CHL1 by BACE1. Cleaves NRCAM. Cleaves TREM2, resulting in shedding of the TREM2 ectodomain. Involved in the development and maturation of glomerular and coronary vasculature. During development of the cochlear organ of Corti, promotes pillar cell separation by forming a ternary complex with CADH1 and EPHA4 and cleaving CADH1 at adherens junctions. May regulate the EFNA5-EPHA3 signaling. Regulates leukocyte transmigration as a sheddase for the adherens junction protein VE-cadherin/CDH5 in endothelial cells. This is Disintegrin and metalloproteinase domain-containing protein 10 (ADAM10) from Bos taurus (Bovine).